The following is a 311-amino-acid chain: tRNA-cytidine(32) 2-sulfurtransferase (311 aa).

A PP-loop motif motif is present at residues 47-52; the sequence is SGGKDS. [4Fe-4S] cluster contacts are provided by C122, C125, and C213.

Belongs to the TtcA family. Homodimer. Mg(2+) is required as a cofactor. [4Fe-4S] cluster serves as cofactor.

Its subcellular location is the cytoplasm. It carries out the reaction cytidine(32) in tRNA + S-sulfanyl-L-cysteinyl-[cysteine desulfurase] + AH2 + ATP = 2-thiocytidine(32) in tRNA + L-cysteinyl-[cysteine desulfurase] + A + AMP + diphosphate + H(+). The protein operates within tRNA modification. In terms of biological role, catalyzes the ATP-dependent 2-thiolation of cytidine in position 32 of tRNA, to form 2-thiocytidine (s(2)C32). The sulfur atoms are provided by the cysteine/cysteine desulfurase (IscS) system. This is tRNA-cytidine(32) 2-sulfurtransferase from Salmonella typhi.